Reading from the N-terminus, the 203-residue chain is uncharacterized protein (203 aa).

This is an uncharacterized protein from Magallana gigas (Pacific oyster).